The chain runs to 228 residues: MYLLIPAAGVGKRMGCDRNKLLLEVRSQPIIAWTLLAAQAASEISWIGIISQPTDWPDFKSILANLQLTKPVEFILGGSTRQESVYNGLQALPKAAEQVLIHDGARCLATPNLLNSCAQAIRHCSGLIAAVPVKDTIKVADEDGIIQSTPDRRNLWAAQTPQGFNVELLKQCHAEGVRQGWEVTDDAALFEKCGIEVQIVEGEETNLKVTTPQDLAIAEFILNSRDNS.

It belongs to the IspD/TarI cytidylyltransferase family. IspD subfamily.

It carries out the reaction 2-C-methyl-D-erythritol 4-phosphate + CTP + H(+) = 4-CDP-2-C-methyl-D-erythritol + diphosphate. Its pathway is isoprenoid biosynthesis; isopentenyl diphosphate biosynthesis via DXP pathway; isopentenyl diphosphate from 1-deoxy-D-xylulose 5-phosphate: step 2/6. Functionally, catalyzes the formation of 4-diphosphocytidyl-2-C-methyl-D-erythritol from CTP and 2-C-methyl-D-erythritol 4-phosphate (MEP). This chain is 2-C-methyl-D-erythritol 4-phosphate cytidylyltransferase, found in Trichormus variabilis (strain ATCC 29413 / PCC 7937) (Anabaena variabilis).